Reading from the N-terminus, the 198-residue chain is Protein hunchback (198 aa).

Disordered regions lie at residues 16-111 and 152-198; these read SHHH…LPGL and NDKL…KYMA. Positions 17–31 are enriched in basic residues; that stretch reads HHHHHHHAHHSHHQH. Composition is skewed to low complexity over residues 35–46 and 56–83; these read SNSNSNASSPHQ and SNTN…QQQQ. Residues 95–105 show a composition bias toward polar residues; that stretch reads PSPSNNDQNSP. Over residues 179-198 the composition is skewed to basic and acidic residues; sequence EPEKEHDLMSNSSEDMKYMA.

This sequence belongs to the hunchback C2H2-type zinc-finger protein family.

It localises to the nucleus. Its function is as follows. Gap class segmentation protein that controls development of head structures. This Drosophila lineosetae (Fruit fly) protein is Protein hunchback (hb).